Consider the following 582-residue polypeptide: 15-cis-phytoene desaturase, chloroplastic/chromoplastic (582 aa).

The transit peptide at 1 to 93 (MNLLGSISTG…ELENTINFLE (93 aa)) directs the protein to the chloroplast and chromoplast. Residues alanine 121, 140-141 (EA), lysine 148, 165-166 (HI), and tyrosine 171 contribute to the FAD site. Arginine 306 serves as a coordination point for substrate. Residue aspartate 537 coordinates FAD. Alanine 545 provides a ligand contact to substrate. An FAD-binding site is contributed by methionine 547.

This sequence belongs to the carotenoid/retinoid oxidoreductase family. Homotetramer. Requires FAD as cofactor. As to expression, expressed in flower buds and lips. Lower expression in leaves and roots.

It is found in the plastid. Its subcellular location is the chloroplast. The protein resides in the chromoplast. It localises to the membrane. The catalysed reaction is 2 a plastoquinone + 15-cis-phytoene = 9,9',15-tri-cis-zeta-carotene + 2 a plastoquinol. Its pathway is carotenoid biosynthesis; lycopene biosynthesis. Its function is as follows. Converts phytoene into zeta-carotene via the intermediary of phytofluene by the symmetrical introduction of two double bonds at the C-11 and C-11' positions of phytoene with a concomitant isomerization of two neighboring double bonds at the C9 and C9' positions from trans to cis. This chain is 15-cis-phytoene desaturase, chloroplastic/chromoplastic (PDS), found in Oncidium hybrid cultivar (Orchid).